Reading from the N-terminus, the 806-residue chain is Volume-regulated anion channel subunit LRRC8E (806 aa).

At 1 to 22 the chain is on the cytoplasmic side; sequence MIPVAEFKQFTEQQPAFKVLKP. Residues 23-43 traverse the membrane as a helical segment; it reads WWDVLAEYITYAMLMIGVFGC. At 44-130 the chain is on the extracellular side; that stretch reads TLQVTQDKII…YETALHWYAK (87 aa). Cys-54 and Cys-311 are joined by a disulfide. N-linked (GlcNAc...) asparagine glycans are attached at residues Asn-57 and Asn-80. Residues 72–81 are compositionally biased toward polar residues; the sequence is YDQQSPPSND. Residues 72 to 103 are disordered; it reads YDQQSPPSNDSDLETTIPPPTATSSPPREMSG. The helical transmembrane segment at 131–151 threads the bilayer; sequence YFPYLVVIHTLIFIICGNFWF. Topologically, residues 152 to 275 are cytoplasmic; it reads KFPGTSSKIE…MRQTVLKVCK (124 aa). The disordered stretch occupies residues 182–213; the sequence is EVSGESSQEKPSQERSIDRELSKPNFEEGSPA. Residues 188–207 are compositionally biased toward basic and acidic residues; sequence SQEKPSQERSIDRELSKPNF. The chain crosses the membrane as a helical span at residues 276 to 296; that stretch reads FVLITIYNAVLVGKIHFIVPC. Topologically, residues 297–323 are extracellular; that stretch reads SVHTEDMTGYNSFCCNHTKAHLFSKLA. N-linked (GlcNAc...) asparagine glycosylation occurs at Asn-312. A helical membrane pass occupies residues 324–344; that stretch reads ITYLCFLGVYGLTCLYTLYWL. The Cytoplasmic segment spans residues 345-806; it reads FRRPLKEYSF…VEVRDKLKED (462 aa). LRR repeat units lie at residues 544 to 566, 569 to 589, 593 to 614, 616 to 637, 641 to 662, 664 to 685, 687 to 708, 710 to 731, 733 to 754, and 756 to 777; these read LKSLKVLTIKSNLSKIPATVADV, HLQKFSIHNDGTKLLTLNALK, LVKELELVRCELERIPHAVFSL, NLQVLDLKENTLHTIEEIISLQ, KLSVLRLWHNQIAYIPEHIRKL, GLEELSLNRNKILVIPSQLFLC, KLRHLDLSNNEIRELPPEIGVL, LLQYLGLSGNFLEDLPNELFFC, KLKTLKLGQNRLGNLSPKVGSL, and CLVKLELKGNRMDTLPPELGNC.

The protein belongs to the LRRC8 family. Heterohexamer; oligomerizes with other LRRC8 proteins (lrrc8a, lrrc8c, lrrc8d and/or lrrc8b) to form a heterohexamer. Detected in a channel complex that contains lrrc8a, lrrc8c and lrrc8e. In vivo, the subunit composition may depend primarily on expression levels, and heterooligomeric channels containing various proportions of the different LRRC8 proteins may coexist.

The protein localises to the cell membrane. The protein resides in the endoplasmic reticulum membrane. It is found in the lysosome membrane. The enzyme catalyses chloride(in) = chloride(out). The catalysed reaction is iodide(out) = iodide(in). It catalyses the reaction taurine(out) = taurine(in). It carries out the reaction 2',3'-cGAMP(out) = 2',3'-cGAMP(in). Its function is as follows. Non-essential component of the volume-regulated anion channel (VRAC, also named VSOAC channel), an anion channel required to maintain a constant cell volume in response to extracellular or intracellular osmotic changes. The VRAC channel conducts iodide better than chloride and can also conduct organic osmolytes like taurine. Mediates efflux of amino acids, such as aspartate, in response to osmotic stress. The VRAC channel also mediates transport of immunoreactive cyclic dinucleotide GMP-AMP (2'-3'-cGAMP), an immune messenger produced in response to DNA virus in the cytosol. Channel activity requires lrrc8a plus at least one other family member (lrrc8b, lrrc8c, lrrc8d or lrrc8e); channel characteristics depend on the precise subunit composition. Also plays a role in lysosome homeostasis by forming functional lysosomal VRAC channels in response to low cytoplasmic ionic strength condition: lysosomal VRAC channels are necessary for the formation of large lysosome-derived vacuoles, which store and then expel excess water to maintain cytosolic water homeostasis. This Xenopus tropicalis (Western clawed frog) protein is Volume-regulated anion channel subunit LRRC8E.